The chain runs to 910 residues: Eukaryotic translation initiation factor 3 subunit C (910 aa).

Residues 1–21 are disordered; that stretch reads MSRFFANGSDSESESSEDEIQ. Residues 11–20 are compositionally biased toward acidic residues; the sequence is SESESSEDEI. 4 positions are modified to phosphoserine: S34, S165, S176, and S185. The segment at 157–281 is disordered; that stretch reads FREAPDQESE…KRAEDDEDGE (125 aa). The span at 162–186 shows a compositional bias: acidic residues; sequence DQESEAEDEVVAQESDGGDAGDDSD. The segment covering 193–207 has biased composition (low complexity); the sequence is EAAPKAVKSAPAKAA. A compositionally biased stretch (acidic residues) spans 209 to 235; it reads ADDDDSDDSIDWDSDSESETESSDDEN. A compositionally biased stretch (basic and acidic residues) spans 240-268; that stretch reads MRERFLKRTTEKEEKDDDKRKDKRKEQKV. The PCI domain occupies 639–815; sequence FHMHINLELL…ETVVMHRSEP (177 aa). Residues 847–910 form a disordered region; that stretch reads FFQRGNMGNR…QQQVQTIDEE (64 aa). Low complexity predominate over residues 862–874; that stretch reads NRNQNNQGGNWLG. Residues 882–891 are compositionally biased toward basic residues; the sequence is RNRNQRGHHK. Positions 895–910 are enriched in low complexity; the sequence is DRQQQQQQQVQTIDEE.

This sequence belongs to the eIF-3 subunit C family. In terms of assembly, component of the eukaryotic translation initiation factor 3 (eIF-3) complex. The eIF-3 complex interacts with pix.

Its subcellular location is the cytoplasm. Functionally, component of the eukaryotic translation initiation factor 3 (eIF-3) complex, which is involved in protein synthesis of a specialized repertoire of mRNAs and, together with other initiation factors, stimulates binding of mRNA and methionyl-tRNAi to the 40S ribosome. The eIF-3 complex specifically targets and initiates translation of a subset of mRNAs involved in cell proliferation. This is Eukaryotic translation initiation factor 3 subunit C from Drosophila yakuba (Fruit fly).